We begin with the raw amino-acid sequence, 52 residues long: Large ribosomal subunit protein bL33 (52 aa).

Belongs to the bacterial ribosomal protein bL33 family.

This Helicobacter acinonychis (strain Sheeba) protein is Large ribosomal subunit protein bL33.